The following is an 835-amino-acid chain: MNQIEQKWQYIWQEEKAFEVSNASSKPKYYVLEMLPYPSGKIHVGHVRNYSIGDVIARFMTMQGFNVLHPMGWDAFGLPAENAAIKNNSHPKKWTYSNIKNMKKQLKSMGFSYDWSREINSCDPEYYKHEQKFFLELYERNLAYQKESFVNWDPVDNTVLANEQVVDGRGWRSGAIVVKRYLKQWFLKITDYAEELLNEIQNLKEWPEAVRSMQEKWIGKSIGANFHFKIKDNEETTIEVFSTKPETIFGASFIGIAFNHPIIERLVSKTPEILAFITQCSHITRSSELEKAEKEGVFTGLFVTHPFDSNIVLPVIITNFVLMDYGTGAIFGCPAHDECDHELAVKMNLSIKQVIKADMDVQKTAYTEDGILINSDFLNGLTSNEAKQEVIGEFEKLGIGKRSVNYRLKDWGISRQRFWGCPIPMIHCEICGIVPVPYKDLPVTLPDDVNFDGHGNPLDHHPSWKHVNCPKCDKPAVRETDTFDTFFESSWYFTRYCNSNATEMTDKKACDYWLPVDKYIGGIEHAVMHLLYARFFTKVMNEQNYVSVREPFKGLFTQGMVLHATYKDEHNNWLYPEEVVKKGNEFFHKESNNRVVQGRIEKMSKSKKNLIDLETMQEQYGADAIRLFVLSDSPPEKDLEWSASGIEGCSRFINKLEYMFKAIDSLKDDVNSEVNKELNRLVHFTIKHVAEDIKHFALNRAIARMRELSNAISAEISKDKIDVKTVRHGFNVLVQLLNPFIPHITEEIWQKLGNKERLYNLSFPAFDESMLELDTYIMAVQVNGKLRDTYEFKTSVSEDEIKQVTVSLPKVQKFLEGKEPKKIILVPRKIVNILV.

The 'HIGH' region motif lies at P36–H46. The short motif at K602–S606 is the 'KMSKS' region element. K605 serves as a coordination point for ATP.

It belongs to the class-I aminoacyl-tRNA synthetase family.

The protein localises to the cytoplasm. It catalyses the reaction tRNA(Leu) + L-leucine + ATP = L-leucyl-tRNA(Leu) + AMP + diphosphate. The sequence is that of Leucine--tRNA ligase from Rickettsia conorii (strain ATCC VR-613 / Malish 7).